Here is a 380-residue protein sequence, read N- to C-terminus: Queuine tRNA-ribosyltransferase (380 aa).

Aspartate 96 (proton acceptor) is an active-site residue. Substrate-binding positions include 96-100 (DSGGF), aspartate 150, glutamine 193, and glycine 220. The interval 251–257 (GVGAPDS) is RNA binding. Catalysis depends on aspartate 270, which acts as the Nucleophile. The tract at residues 275 to 279 (TRIAR) is RNA binding; important for wobble base 34 recognition. Residues cysteine 308, cysteine 310, cysteine 313, and histidine 339 each coordinate Zn(2+).

This sequence belongs to the queuine tRNA-ribosyltransferase family. As to quaternary structure, homodimer. Within each dimer, one monomer is responsible for RNA recognition and catalysis, while the other monomer binds to the replacement base PreQ1. It depends on Zn(2+) as a cofactor.

The enzyme catalyses 7-aminomethyl-7-carbaguanine + guanosine(34) in tRNA = 7-aminomethyl-7-carbaguanosine(34) in tRNA + guanine. It functions in the pathway tRNA modification; tRNA-queuosine biosynthesis. In terms of biological role, catalyzes the base-exchange of a guanine (G) residue with the queuine precursor 7-aminomethyl-7-deazaguanine (PreQ1) at position 34 (anticodon wobble position) in tRNAs with GU(N) anticodons (tRNA-Asp, -Asn, -His and -Tyr). Catalysis occurs through a double-displacement mechanism. The nucleophile active site attacks the C1' of nucleotide 34 to detach the guanine base from the RNA, forming a covalent enzyme-RNA intermediate. The proton acceptor active site deprotonates the incoming PreQ1, allowing a nucleophilic attack on the C1' of the ribose to form the product. After dissociation, two additional enzymatic reactions on the tRNA convert PreQ1 to queuine (Q), resulting in the hypermodified nucleoside queuosine (7-(((4,5-cis-dihydroxy-2-cyclopenten-1-yl)amino)methyl)-7-deazaguanosine). This chain is Queuine tRNA-ribosyltransferase, found in Streptococcus thermophilus (strain CNRZ 1066).